The chain runs to 481 residues: Protein nucleotidyltransferase YdiU (481 aa).

ATP contacts are provided by Gly85, Gly87, Arg88, Lys108, Asp120, Gly121, Arg172, and Arg179. Residue Asp248 is the Proton acceptor of the active site. Mg(2+) is bound by residues Asn249 and Asp258. Asp258 is a binding site for ATP.

It belongs to the SELO family. Requires Mg(2+) as cofactor. Mn(2+) is required as a cofactor.

It carries out the reaction L-seryl-[protein] + ATP = 3-O-(5'-adenylyl)-L-seryl-[protein] + diphosphate. The enzyme catalyses L-threonyl-[protein] + ATP = 3-O-(5'-adenylyl)-L-threonyl-[protein] + diphosphate. It catalyses the reaction L-tyrosyl-[protein] + ATP = O-(5'-adenylyl)-L-tyrosyl-[protein] + diphosphate. The catalysed reaction is L-histidyl-[protein] + UTP = N(tele)-(5'-uridylyl)-L-histidyl-[protein] + diphosphate. It carries out the reaction L-seryl-[protein] + UTP = O-(5'-uridylyl)-L-seryl-[protein] + diphosphate. The enzyme catalyses L-tyrosyl-[protein] + UTP = O-(5'-uridylyl)-L-tyrosyl-[protein] + diphosphate. Nucleotidyltransferase involved in the post-translational modification of proteins. It can catalyze the addition of adenosine monophosphate (AMP) or uridine monophosphate (UMP) to a protein, resulting in modifications known as AMPylation and UMPylation. The sequence is that of Protein nucleotidyltransferase YdiU from Cereibacter sphaeroides (strain ATCC 17029 / ATH 2.4.9) (Rhodobacter sphaeroides).